Consider the following 377-residue polypeptide: N-acetyldiaminopimelate deacetylase (377 aa).

Residue Asp-69 is part of the active site. Glu-128 acts as the Proton acceptor in catalysis.

The protein belongs to the peptidase M20A family. N-acetyldiaminopimelate deacetylase subfamily.

The catalysed reaction is N-acetyl-(2S,6S)-2,6-diaminopimelate + H2O = (2S,6S)-2,6-diaminopimelate + acetate. The protein operates within amino-acid biosynthesis; L-lysine biosynthesis via DAP pathway; LL-2,6-diaminopimelate from (S)-tetrahydrodipicolinate (acetylase route): step 3/3. Catalyzes the conversion of N-acetyl-diaminopimelate to diaminopimelate and acetate. The chain is N-acetyldiaminopimelate deacetylase from Streptococcus gordonii (strain Challis / ATCC 35105 / BCRC 15272 / CH1 / DL1 / V288).